The sequence spans 447 residues: MSRKYFGTDGIRGRVGESPITPDFVLRLGYAAGRVLAHGSEAHGHGRPTVLIGKDTRLSGYMLEAALEAGFTAAGVDVLMSGPLPTPGVAYLTRALRLSAGVVISASHNPYYDNGIKFFSATGDKLPDETESQIEAELEKPMVYAASDALGRARRIDDAAGRYIEFCKSTFPNDLNLFGMKIVLDSAHGAAYHIAPHVFHELGAEVVSIGNQPNGRNINDGYGATEPAKLIEATRQHGADLGLAFDGDADRLQVVDRNGRLYNGDELLYVMVQARRAAGQAVPGAVGTLMTNLAVELALKAQGVEFVRAKVGDRYVLEELKKHGWLLGGEGSGHLLCLDKHSTGDGIISALQVLAALRRSGQTLEQVLDGVHLFPQKLINVRVEKGFDWKAHAALQAALKVSEAELNGKGRVLIRPSGTEPVVRVMVEAQDAALATKYAEQLAATLQ.

The active-site Phosphoserine intermediate is the Ser107. Residues Ser107, Asp246, Asp248, and Asp250 each contribute to the Mg(2+) site. Ser107 is modified (phosphoserine).

It belongs to the phosphohexose mutase family. Mg(2+) serves as cofactor. In terms of processing, activated by phosphorylation.

The catalysed reaction is alpha-D-glucosamine 1-phosphate = D-glucosamine 6-phosphate. Catalyzes the conversion of glucosamine-6-phosphate to glucosamine-1-phosphate. The sequence is that of Phosphoglucosamine mutase from Ralstonia nicotianae (strain ATCC BAA-1114 / GMI1000) (Ralstonia solanacearum).